The chain runs to 317 residues: Tenomodulin (317 aa).

Residues methionine 1–lysine 30 lie on the Cytoplasmic side of the membrane. The helical; Signal-anchor for type II membrane protein transmembrane segment at isoleucine 31 to serine 50 threads the bilayer. Residues lysine 51 to valine 317 are Extracellular-facing. The 94-residue stretch at glycine 93–isoleucine 186 folds into the BRICHOS domain. Asparagine 94 carries N-linked (GlcNAc...) asparagine glycosylation. Cysteine 120 and cysteine 178 are joined by a disulfide. Asparagine 180 carries N-linked (GlcNAc...) asparagine glycosylation. Serine 239 is subject to Phosphoserine.

It belongs to the chondromodulin-1 family. As to expression, highly expressed in tendons.

It is found in the membrane. The protein localises to the nucleus envelope. May be an angiogenesis inhibitor. In Rattus norvegicus (Rat), this protein is Tenomodulin (Tnmd).